The primary structure comprises 314 residues: Olfactory receptor 8U9 (314 aa).

Residues 1-25 (MAQINCTQVTEFILVGLTDREELKM) lie on the Extracellular side of the membrane. Asn5 carries an N-linked (GlcNAc...) asparagine glycan. A helical membrane pass occupies residues 26–46 (PLFVVFLSIYLFTTLGNLGLI). The Cytoplasmic portion of the chain corresponds to 47 to 54 (LVIRTDAR). Residues 55-75 (LHTPMYFFLSNLAFVDFCYSS) traverse the membrane as a helical segment. Over 76–99 (VITPKMLGNFLYKQNMISFNACAA) the chain is Extracellular. Cysteines 97 and 189 form a disulfide. The helical transmembrane segment at 100–120 (QLGCFLAFMTAECLLLASMAY) threads the bilayer. Topologically, residues 121–133 (DRYVAICNPLLYM) are cytoplasmic. Residues 134–154 (VLMSPGICFQLVAAPYSYSFL) form a helical membrane-spanning segment. Residues 155–196 (VALFHAILTFRLCYCHSNAINHFYCDDMPLLRLTCSDTHSKQ) are Extracellular-facing. Residues 197-217 (LWIFVCAGIMFISSLLIVFIS) traverse the membrane as a helical segment. Residues 218–237 (YTFIISAILRMRSAEGRRKA) are Cytoplasmic-facing. The helical transmembrane segment at 238-258 (FSTCGSHMLAVTIFYGTLIFM) threads the bilayer. Over 259-271 (YLQPSSNHSLDTD) the chain is Extracellular. Residue Asn265 is glycosylated (N-linked (GlcNAc...) asparagine). Residues 272–292 (KMASVFYTVIIPMLNPLIYSL) form a helical membrane-spanning segment. Residues 293–314 (RNKEVKDALKKLIASKNQMLSS) are Cytoplasmic-facing.

The protein belongs to the G-protein coupled receptor 1 family.

Its subcellular location is the cell membrane. Its function is as follows. Potential odorant receptor. This is Olfactory receptor 8U9 from Mus musculus (Mouse).